The primary structure comprises 78 residues: Small ribosomal subunit protein bS18 (78 aa).

This sequence belongs to the bacterial ribosomal protein bS18 family. In terms of assembly, part of the 30S ribosomal subunit. Forms a tight heterodimer with protein bS6.

Functionally, binds as a heterodimer with protein bS6 to the central domain of the 16S rRNA, where it helps stabilize the platform of the 30S subunit. The polypeptide is Small ribosomal subunit protein bS18 (Lactobacillus delbrueckii subsp. bulgaricus (strain ATCC 11842 / DSM 20081 / BCRC 10696 / JCM 1002 / NBRC 13953 / NCIMB 11778 / NCTC 12712 / WDCM 00102 / Lb 14)).